A 206-amino-acid chain; its full sequence is LexA repressor (206 aa).

The segment at residues Val28 to Asp48 is a DNA-binding region (H-T-H motif). Catalysis depends on for autocatalytic cleavage activity residues Ser128 and Lys166.

Belongs to the peptidase S24 family. As to quaternary structure, homodimer.

It catalyses the reaction Hydrolysis of Ala-|-Gly bond in repressor LexA.. Functionally, represses a number of genes involved in the response to DNA damage (SOS response), including recA and lexA. In the presence of single-stranded DNA, RecA interacts with LexA causing an autocatalytic cleavage which disrupts the DNA-binding part of LexA, leading to derepression of the SOS regulon and eventually DNA repair. This is LexA repressor from Exiguobacterium sp. (strain ATCC BAA-1283 / AT1b).